The following is a 461-amino-acid chain: B3 domain-containing protein REM9 (461 aa).

Positions 11–103 (NQHFFQPLLP…VFHVTALGPS (93 aa)) form a DNA-binding region, TF-B3 1. Positions 110–146 (PQSSRHEEGEESGENEISEKEGEENVQKESDKSSSDL) are disordered. The span at 126-143 (ISEKEGEENVQKESDKSS) shows a compositional bias: basic and acidic residues. DNA-binding regions (TF-B3) lie at residues 148-244 (CFSQ…CSRT) and 230-332 (LQKA…EQPS). The tract at residues 333-415 (FKAEDGRHKR…SGIEGNLQHT (83 aa)) is disordered. A compositionally biased stretch (basic and acidic residues) spans 384–394 (PKVEIREKIAE). Over residues 400–415 (RASNKSSGIEGNLQHT) the composition is skewed to polar residues.

The protein resides in the nucleus. In Arabidopsis thaliana (Mouse-ear cress), this protein is B3 domain-containing protein REM9 (REM9).